Reading from the N-terminus, the 152-residue chain is Phosphoribosyl-AMP cyclohydrolase (152 aa).

Mg(2+) is bound at residue aspartate 92. Cysteine 93 provides a ligand contact to Zn(2+). Positions 94 and 96 each coordinate Mg(2+). Zn(2+)-binding residues include cysteine 111 and cysteine 118.

The protein belongs to the PRA-CH family. As to quaternary structure, homodimer. Mg(2+) serves as cofactor. Requires Zn(2+) as cofactor.

The protein resides in the cytoplasm. The enzyme catalyses 1-(5-phospho-beta-D-ribosyl)-5'-AMP + H2O = 1-(5-phospho-beta-D-ribosyl)-5-[(5-phospho-beta-D-ribosylamino)methylideneamino]imidazole-4-carboxamide. It participates in amino-acid biosynthesis; L-histidine biosynthesis; L-histidine from 5-phospho-alpha-D-ribose 1-diphosphate: step 3/9. Its function is as follows. Catalyzes the hydrolysis of the adenine ring of phosphoribosyl-AMP. The polypeptide is Phosphoribosyl-AMP cyclohydrolase (Sinorhizobium fredii (strain NBRC 101917 / NGR234)).